The following is a 152-amino-acid chain: Ubiquitin-activating enzyme E1 Y (152 aa).

Cys51 serves as the catalytic Glycyl thioester intermediate.

This sequence belongs to the ubiquitin-activating E1 family. As to quaternary structure, monomer.

It catalyses the reaction ATP + ubiquitin + [E1 ubiquitin-activating enzyme]-L-cysteine = AMP + diphosphate + S-ubiquitinyl-[E1 ubiquitin-activating enzyme]-L-cysteine.. It participates in protein modification; protein ubiquitination. In terms of biological role, activates ubiquitin by first adenylating its C-terminal glycine residue with ATP, and thereafter linking this residue to the side chain of a cysteine residue in E1, yielding a ubiquitin-E1 thioester and free AMP. The Y chromosome form could be involved in the survival and proliferation of differentiating spermatogonia. In Osphranter rufus (Red kangaroo), this protein is Ubiquitin-activating enzyme E1 Y (UBE1Y).